Consider the following 242-residue polypeptide: Protein GrpE (242 aa).

A compositionally biased stretch (polar residues) spans 1–10 (MAGENSSTET). The disordered stretch occupies residues 1–64 (MAGENSSTET…QSTESTSKEK (64 aa)). Basic and acidic residues predominate over residues 11 to 20 (KNQEINEKTP). Composition is skewed to polar residues over residues 21 to 32 (EVQTFETNVEFE) and 40 to 59 (DTEL…STES).

It belongs to the GrpE family. As to quaternary structure, homodimer.

The protein resides in the cytoplasm. Functionally, participates actively in the response to hyperosmotic and heat shock by preventing the aggregation of stress-denatured proteins, in association with DnaK and GrpE. It is the nucleotide exchange factor for DnaK and may function as a thermosensor. Unfolded proteins bind initially to DnaJ; upon interaction with the DnaJ-bound protein, DnaK hydrolyzes its bound ATP, resulting in the formation of a stable complex. GrpE releases ADP from DnaK; ATP binding to DnaK triggers the release of the substrate protein, thus completing the reaction cycle. Several rounds of ATP-dependent interactions between DnaJ, DnaK and GrpE are required for fully efficient folding. In Trichodesmium erythraeum (strain IMS101), this protein is Protein GrpE.